Consider the following 207-residue polypeptide: Superoxide dismutase [Mn] (207 aa).

The Mn(2+) site is built by His-28, His-76, Asp-160, and His-164.

This sequence belongs to the iron/manganese superoxide dismutase family. Requires Mn(2+) as cofactor.

It carries out the reaction 2 superoxide + 2 H(+) = H2O2 + O2. Destroys superoxide anion radicals which are normally produced within the cells and which are toxic to biological systems. This chain is Superoxide dismutase [Mn] (sodA), found in Mycobacterium avium.